The following is a 370-amino-acid chain: Small ribosomal subunit biogenesis GTPase RsgA (370 aa).

The CP-type G domain maps to 97 to 255; the sequence is QTQLDRPPIA…LADTPGFNQP (159 aa). GTP-binding positions include 146-149 and 197-205; these read NKSD and GPSGVGKSS. Residues C280, C285, H287, and C293 each coordinate Zn(2+). Positions 328 to 370 are disordered; sequence TLKLKTKGKGQSQYEPKLESKKYRRTSRRTQVQGLQDLYQEEE.

This sequence belongs to the TRAFAC class YlqF/YawG GTPase family. RsgA subfamily. As to quaternary structure, monomer. Associates with 30S ribosomal subunit, binds 16S rRNA. It depends on Zn(2+) as a cofactor.

The protein localises to the cytoplasm. Functionally, one of several proteins that assist in the late maturation steps of the functional core of the 30S ribosomal subunit. Helps release RbfA from mature subunits. May play a role in the assembly of ribosomal proteins into the subunit. Circularly permuted GTPase that catalyzes slow GTP hydrolysis, GTPase activity is stimulated by the 30S ribosomal subunit. This is Small ribosomal subunit biogenesis GTPase RsgA from Trichormus variabilis (strain ATCC 29413 / PCC 7937) (Anabaena variabilis).